Here is an 857-residue protein sequence, read N- to C-terminus: Dynein regulatory complex protein 11 (857 aa).

The 30-residue stretch at 206 to 235 folds into the IQ domain; it reads TKLAALQIQKVWRGFHQCKKTVKEREEEMV. Residues 348-388 form a disordered region; the sequence is EEKLKKKKKKEDKENKGKKGKKEKKEKKEKKVSLKEKAMKD. A compositionally biased stretch (basic residues) spans 365–375; it reads KKGKKEKKEKK. The span at 376–387 shows a compositional bias: basic and acidic residues; sequence EKKVSLKEKAMK. ATP is bound at residue 598-605; it reads GPSGVGKK. Residues 834–857 form a disordered region; sequence SLTVGNKEKEKDKGKKGKRGKKKK. Residues 847-857 are compositionally biased toward basic residues; it reads GKKGKRGKKKK.

Belongs to the AAA ATPase family. DRC11 subfamily. As to quaternary structure, component of the nexin-dynein regulatory complex (N-DRC).

The protein resides in the cytoplasm. The protein localises to the cytoskeleton. Its subcellular location is the flagellum axoneme. Its function is as follows. Component of the nexin-dynein regulatory complex (N-DRC), a key regulator of ciliary/flagellar motility which maintains the alignment and integrity of the distal axoneme and regulates microtubule sliding in motile axonemes. In Mus musculus (Mouse), this protein is Dynein regulatory complex protein 11 (Iqca1).